The sequence spans 171 residues: S-ribosylhomocysteine lyase (171 aa).

Fe cation-binding residues include His54, His58, and Cys128.

It belongs to the LuxS family. Homodimer. Requires Fe cation as cofactor.

It carries out the reaction S-(5-deoxy-D-ribos-5-yl)-L-homocysteine = (S)-4,5-dihydroxypentane-2,3-dione + L-homocysteine. Its function is as follows. Involved in the synthesis of autoinducer 2 (AI-2) which is secreted by bacteria and is used to communicate both the cell density and the metabolic potential of the environment. The regulation of gene expression in response to changes in cell density is called quorum sensing. Catalyzes the transformation of S-ribosylhomocysteine (RHC) to homocysteine (HC) and 4,5-dihydroxy-2,3-pentadione (DPD). This Salmonella agona (strain SL483) protein is S-ribosylhomocysteine lyase.